Here is a 270-residue protein sequence, read N- to C-terminus: Mevalonyl-coenzyme A hydratase sidH (270 aa).

Residues 268 to 270 carry the PTS1-type peroxisomal targeting signal motif; sequence SKL.

Belongs to the enoyl-CoA hydratase/isomerase family.

Its subcellular location is the peroxisome. It participates in siderophore biosynthesis. In terms of biological role, mevalonyl-coenzyme A hydratase; part of the siderophore biosynthetic pathway. Aspergillus fumigatus produces 4 types of siderophores, low-molecular-mass iron chelators, including excreted fusarinine C (FsC) and triacetylfusarinine C (TAFC) for iron uptake and intacellular ferricrocin (FC) for hyphal and hydroxyferricrocin (HFC) for conidial iron distribution and storage. TAFC consists of 3 N(2)-acetyl-N(5)-anhydromevalonyl-N(5)-hydroxyornithine residues cyclically linked by ester bonds; FC is a cyclic hexapeptide with the structure Gly-Ser-Gly-(N(5)-acetyl-N(5)-hydroxyornithine)x3. The biosynthesis of all four siderophores depends on the hydroxylation of ornithine, catalyzed by the monooxygenase sidA. Subsequently, the pathways for biosynthesis of extra- and intracellular siderophores split. For biosynthesis of extracellular siderophores, the transacylase sidF transfers anhydromevalonyl to N(5)-hydroxyornithine. The required anhydromevalonyl-CoA moiety is derived from mevalonate by CoA ligation and dehydration catalyzed by sidI and sidH respectively. The acetylation of N(5)-hydroxyornithine for FC biosynthesis involves the constitutively expressed sidL. FC is hydroxylated to HFC by an as yet uncharacterized enzyme during conidiation. Assembly of fusarinine C (FsC) and FC is catalyzed by two different nonribosomal peptide synthetases (NRPS), sidD and sidC respectively. Subsequently, sidG catalyzes N2-acetylation of FsC for forming TAFC. Both extra- and intracellular siderophores are crucial for growth during iron limitation and virulence. This chain is Mevalonyl-coenzyme A hydratase sidH, found in Aspergillus fumigatus (strain ATCC MYA-4609 / CBS 101355 / FGSC A1100 / Af293) (Neosartorya fumigata).